The following is an 828-amino-acid chain: Periplasmic nitrate reductase (828 aa).

Residues 1-33 constitute a signal peptide (tat-type signal); the sequence is MKLSRRDFMKANAAVAAAAAAGLTIPTVVQAAA. Residues 39–95 form the 4Fe-4S Mo/W bis-MGD-type domain; that stretch reads IKWDKAPCRFCGTGCGVLVGTQNGRIVASQGDPEAAVNRGLSCIKGYFLPKIMYGKD. [4Fe-4S] cluster contacts are provided by Cys46, Cys49, Cys53, and Cys81. Mo-bis(molybdopterin guanine dinucleotide)-binding positions include Lys83, Gln150, Asn175, Cys179, 212–219, 243–247, 262–264, Met372, Gln376, Asn482, 508–509, Lys531, Asp558, and 718–727; these read WGSNMAEM, STFEH, QTD, SD, and TGRVLEHWHT. A substrate-binding site is contributed by Phe794. 2 residues coordinate Mo-bis(molybdopterin guanine dinucleotide): Asn802 and Lys819.

This sequence belongs to the prokaryotic molybdopterin-containing oxidoreductase family. NasA/NapA/NarB subfamily. In terms of assembly, component of the periplasmic nitrate reductase NapAB complex composed of NapA and NapB. Requires [4Fe-4S] cluster as cofactor. The cofactor is Mo-bis(molybdopterin guanine dinucleotide). Predicted to be exported by the Tat system. The position of the signal peptide cleavage has not been experimentally proven.

The protein resides in the periplasm. It carries out the reaction 2 Fe(II)-[cytochrome] + nitrate + 2 H(+) = 2 Fe(III)-[cytochrome] + nitrite + H2O. In terms of biological role, catalytic subunit of the periplasmic nitrate reductase complex NapAB. Receives electrons from NapB and catalyzes the reduction of nitrate to nitrite. This Serratia proteamaculans (strain 568) protein is Periplasmic nitrate reductase.